A 166-amino-acid polypeptide reads, in one-letter code: Regulator of ribonuclease activity A (166 aa).

It belongs to the RraA family. As to quaternary structure, homotrimer. Binds to both RNA-binding sites in the C-terminal region of Rne and to RhlB.

The protein resides in the cytoplasm. In terms of biological role, globally modulates RNA abundance by binding to RNase E (Rne) and regulating its endonucleolytic activity. Can modulate Rne action in a substrate-dependent manner by altering the composition of the degradosome. Modulates RNA-binding and helicase activities of the degradosome. The polypeptide is Regulator of ribonuclease activity A (Histophilus somni (strain 129Pt) (Haemophilus somnus)).